The following is a 235-amino-acid chain: tRNA1(Val) (adenine(37)-N6)-methyltransferase (235 aa).

Belongs to the methyltransferase superfamily. tRNA (adenine-N(6)-)-methyltransferase family.

It is found in the cytoplasm. It carries out the reaction adenosine(37) in tRNA1(Val) + S-adenosyl-L-methionine = N(6)-methyladenosine(37) in tRNA1(Val) + S-adenosyl-L-homocysteine + H(+). Functionally, specifically methylates the adenine in position 37 of tRNA(1)(Val) (anticodon cmo5UAC). This is tRNA1(Val) (adenine(37)-N6)-methyltransferase from Flavobacterium johnsoniae (strain ATCC 17061 / DSM 2064 / JCM 8514 / BCRC 14874 / CCUG 350202 / NBRC 14942 / NCIMB 11054 / UW101) (Cytophaga johnsonae).